Reading from the N-terminus, the 126-residue chain is Small ribosomal subunit protein bS6 (126 aa).

The disordered stretch occupies residues Leu-104–Ala-126. Residues Ala-105–Phe-120 show a composition bias toward basic and acidic residues.

This sequence belongs to the bacterial ribosomal protein bS6 family.

Binds together with bS18 to 16S ribosomal RNA. The sequence is that of Small ribosomal subunit protein bS6 from Caulobacter vibrioides (strain ATCC 19089 / CIP 103742 / CB 15) (Caulobacter crescentus).